The primary structure comprises 554 residues: Methyl-coenzyme M reductase II subunit alpha (554 aa).

Glutamine 151 is a binding site for coenzyme F430. Coenzyme B-binding positions include arginine 229, 260–261 (KH), and arginine 274. Residues tyrosine 336 and tyrosine 447 each contribute to the coenzyme M site.

The protein belongs to the methyl-coenzyme M reductase alpha subunit family. MCR is a hexamer of two alpha, two beta, and two gamma chains, forming a dimer of heterotrimers. Requires coenzyme F430 as cofactor.

It carries out the reaction coenzyme B + methyl-coenzyme M = methane + coenzyme M-coenzyme B heterodisulfide. The protein operates within one-carbon metabolism; methyl-coenzyme M reduction; methane from methyl-coenzyme M: step 1/1. Component of the methyl-coenzyme M reductase (MCR) I that catalyzes the reductive cleavage of methyl-coenzyme M (CoM-S-CH3 or 2-(methylthio)ethanesulfonate) using coenzyme B (CoB or 7-mercaptoheptanoylthreonine phosphate) as reductant which results in the production of methane and the mixed heterodisulfide of CoB and CoM (CoM-S-S-CoB). This is the final step in methanogenesis. This Methanothermus fervidus (strain ATCC 43054 / DSM 2088 / JCM 10308 / V24 S) protein is Methyl-coenzyme M reductase II subunit alpha (mrtA).